The primary structure comprises 481 residues: Protein nucleotidyltransferase YdiU (481 aa).

Gly85, Gly87, Arg88, Lys108, Asp120, Gly121, Arg172, and Arg179 together coordinate ATP. Catalysis depends on Asp248, which acts as the Proton acceptor. Asn249 and Asp258 together coordinate Mg(2+). Asp258 contributes to the ATP binding site.

Belongs to the SELO family. The cofactor is Mg(2+). Mn(2+) is required as a cofactor.

The enzyme catalyses L-seryl-[protein] + ATP = 3-O-(5'-adenylyl)-L-seryl-[protein] + diphosphate. The catalysed reaction is L-threonyl-[protein] + ATP = 3-O-(5'-adenylyl)-L-threonyl-[protein] + diphosphate. It catalyses the reaction L-tyrosyl-[protein] + ATP = O-(5'-adenylyl)-L-tyrosyl-[protein] + diphosphate. It carries out the reaction L-histidyl-[protein] + UTP = N(tele)-(5'-uridylyl)-L-histidyl-[protein] + diphosphate. The enzyme catalyses L-seryl-[protein] + UTP = O-(5'-uridylyl)-L-seryl-[protein] + diphosphate. The catalysed reaction is L-tyrosyl-[protein] + UTP = O-(5'-uridylyl)-L-tyrosyl-[protein] + diphosphate. Its function is as follows. Nucleotidyltransferase involved in the post-translational modification of proteins. It can catalyze the addition of adenosine monophosphate (AMP) or uridine monophosphate (UMP) to a protein, resulting in modifications known as AMPylation and UMPylation. In Cereibacter sphaeroides (strain KD131 / KCTC 12085) (Rhodobacter sphaeroides), this protein is Protein nucleotidyltransferase YdiU.